We begin with the raw amino-acid sequence, 256 residues long: Ciliary microtubule associated protein 1A (256 aa).

STPGR repeat units lie at residues 66–92 (PGPG…IYGR), 181–206 (PGPG…MTAR), and 217–242 (PGPG…FGIR). The tract at residues 91 to 115 (GRPRDISSFRTPGPGSYSPERAGKS) is disordered.

This sequence belongs to the CIMAP family.

It localises to the cytoplasm. It is found in the cytoskeleton. The protein localises to the flagellum axoneme. Functionally, outer dense fibers are filamentous structures located on the outside of the axoneme in the midpiece and principal piece of the mammalian sperm tail. May help to maintain the passive elastic structures and elastic recoil of the sperm tail. The sequence is that of Ciliary microtubule associated protein 1A (cimap1a) from Xenopus laevis (African clawed frog).